Consider the following 364-residue polypeptide: Peptide chain release factor 1 (364 aa).

Gln-238 carries the N5-methylglutamine modification. Basic and acidic residues predominate over residues 286–297; that stretch reads DEKRQAEEDSTR. Residues 286 to 315 form a disordered region; the sequence is DEKRQAEEDSTRRNLVGSGDRSERIRTYNY.

Belongs to the prokaryotic/mitochondrial release factor family. Methylated by PrmC. Methylation increases the termination efficiency of RF1.

It localises to the cytoplasm. In terms of biological role, peptide chain release factor 1 directs the termination of translation in response to the peptide chain termination codons UAG and UAA. The protein is Peptide chain release factor 1 of Idiomarina loihiensis (strain ATCC BAA-735 / DSM 15497 / L2-TR).